The chain runs to 135 residues: Transcription antitermination protein NusB (135 aa).

This sequence belongs to the NusB family.

In terms of biological role, involved in transcription antitermination. Required for transcription of ribosomal RNA (rRNA) genes. Binds specifically to the boxA antiterminator sequence of the ribosomal RNA (rrn) operons. This Shewanella piezotolerans (strain WP3 / JCM 13877) protein is Transcription antitermination protein NusB.